The following is a 738-amino-acid chain: Glucan 1,4-alpha-glucosidase SusB (738 aa).

Residues 1–21 (MKKRKILSLIAFLCISFIANA) form the signal peptide. Glu194 is a Ca(2+) binding site. Residues 215 to 217 (PNS), 437 to 439 (HHE), and 507 to 508 (HE) each bind substrate. Ca(2+) contacts are provided by Glu508, Glu526, and Glu532. Catalysis depends on Glu532, which acts as the Proton donor/acceptor.

The protein belongs to the glycosyl hydrolase 97 family. In terms of assembly, monomer. Ca(2+) is required as a cofactor.

Its subcellular location is the periplasm. The enzyme catalyses Hydrolysis of terminal (1-&gt;4)-linked alpha-D-glucose residues successively from non-reducing ends of the chains with release of beta-D-glucose.. It functions in the pathway glycan degradation; starch degradation. Functionally, glucoamylase that hydrolyzes alpha-1,4-glucosidic linkages, alpha-1,6-, alpha-1,3- and alpha-1,2-glucosidic linkages during starch degradation. The polypeptide is Glucan 1,4-alpha-glucosidase SusB (susB) (Bacteroides thetaiotaomicron (strain ATCC 29148 / DSM 2079 / JCM 5827 / CCUG 10774 / NCTC 10582 / VPI-5482 / E50)).